The chain runs to 143 residues: Hemoglobin subunit alpha-1 (143 aa).

At serine 2 the chain carries N-acetylserine. In terms of domain architecture, Globin spans 2-143; sequence SLSTKDKETV…VSLALAEKYR (142 aa). Histidine 60 is a binding site for O2. Histidine 89 lines the heme b pocket.

Belongs to the globin family. Hb1 is a heterotetramer of two alpha-1 chains and two beta-1 chains. In terms of tissue distribution, red blood cells.

In terms of biological role, involved in oxygen transport from gills to the various peripheral tissues. The sequence is that of Hemoglobin subunit alpha-1 from Liparis tunicatus (Kelp snailfish).